The following is a 390-amino-acid chain: Methylthioribose-1-phosphate isomerase (390 aa).

Residue Asp-258 is the Proton donor of the active site.

This sequence belongs to the eIF-2B alpha/beta/delta subunits family. MtnA subfamily.

The protein resides in the cytoplasm. It is found in the nucleus. It carries out the reaction 5-(methylsulfanyl)-alpha-D-ribose 1-phosphate = 5-(methylsulfanyl)-D-ribulose 1-phosphate. Its pathway is amino-acid biosynthesis; L-methionine biosynthesis via salvage pathway; L-methionine from S-methyl-5-thio-alpha-D-ribose 1-phosphate: step 1/6. Its function is as follows. Catalyzes the interconversion of methylthioribose-1-phosphate (MTR-1-P) into methylthioribulose-1-phosphate (MTRu-1-P). This Coccidioides posadasii (strain C735) (Valley fever fungus) protein is Methylthioribose-1-phosphate isomerase.